The sequence spans 285 residues: 4-diphosphocytidyl-2-C-methyl-D-erythritol kinase (285 aa).

Residue K10 is part of the active site. An ATP-binding site is contributed by 94-104; the sequence is PVAAGLGGGSS. D136 is an active-site residue.

It belongs to the GHMP kinase family. IspE subfamily.

It carries out the reaction 4-CDP-2-C-methyl-D-erythritol + ATP = 4-CDP-2-C-methyl-D-erythritol 2-phosphate + ADP + H(+). It functions in the pathway isoprenoid biosynthesis; isopentenyl diphosphate biosynthesis via DXP pathway; isopentenyl diphosphate from 1-deoxy-D-xylulose 5-phosphate: step 3/6. Its function is as follows. Catalyzes the phosphorylation of the position 2 hydroxy group of 4-diphosphocytidyl-2C-methyl-D-erythritol. This Latilactobacillus sakei subsp. sakei (strain 23K) (Lactobacillus sakei subsp. sakei) protein is 4-diphosphocytidyl-2-C-methyl-D-erythritol kinase.